The following is a 360-amino-acid chain: Alpha-N-acetyl-neuraminyl-2,3-beta-galactosyl-1,3-N-acetyl-galactosaminide alpha-2,6-sialyltransferase (360 aa).

The Cytoplasmic segment spans residues 1 to 71 (MEHVVTCWRL…PGRLLLLTLC (71 aa)). A helical; Signal-anchor for type II membrane protein membrane pass occupies residues 72–94 (ILTFSAVCVFLCCWACLPLCLAT). The Lumenal portion of the chain corresponds to 95-360 (CLDRHLPAAP…VFAHPSWRAK (266 aa)). Cys134 and Cys283 form a disulfide bridge. An N-linked (GlcNAc...) asparagine glycan is attached at Asn193.

It belongs to the glycosyltransferase 29 family. As to expression, high expression in brain and colon and to a lesser extent in lung, heart, kidney, spleen and thymus.

It is found in the golgi apparatus membrane. It carries out the reaction an alpha-Neu5Ac-(2-&gt;3)-beta-D-Gal-(1-&gt;3)-D-GlcNAc derivative + CMP-N-acetyl-beta-neuraminate = an alpha-Neu5Ac-(2-&gt;3)-beta-D-Gal-(1-&gt;3)-[alpha-Neu5Ac-(2-&gt;6)]-D-GlcNAc derivative + CMP + H(+). The enzyme catalyses N-acetyl-alpha-neuraminosyl-(2-&gt;3)-beta-D-galactosyl-(1-&gt;3)-N-acetyl-D-galactosamine + CMP-N-acetyl-beta-neuraminate = N-acetyl-alpha-neuraminosyl-(2-&gt;3)-beta-D-galactosyl-(1-&gt;3)-[N-acetyl-alpha-neuraminosyl-(2-&gt;6)]-N-acetyl-D-galactosamine + CMP + H(+). It catalyses the reaction a ganglioside GM1b (d18:1(4E)) + CMP-N-acetyl-beta-neuraminate = a ganglioside GD1alpha (d18:1(4E)) + CMP + H(+). The catalysed reaction is 3-O-[alpha-Neu5Ac-(2-&gt;3)-beta-D-Gal-(1-&gt;3)-alpha-D-GalNAc]-L-Ser-[protein] + CMP-N-acetyl-beta-neuraminate = a 3-O-{alpha-Neu5Ac-(2-&gt;3)-beta-D-Gal-(1-&gt;3)-[alpha-Neu5Ac-(2-&gt;6)]-alpha-D-GalNAc}-L-seryl-[protein] + CMP + H(+). It carries out the reaction 3-O-[alpha-Neu5Ac-(2-&gt;3)-beta-D-Gal-(1-&gt;3)-alpha-D-GalNAc]-L-Thr-[protein] + CMP-N-acetyl-beta-neuraminate = a 3-O-{alpha-Neu5Ac-(2-&gt;3)-beta-D-Gal-(1-&gt;3)-[alpha-Neu5Ac-(2-&gt;6)]-alpha-D-GalNAc}-L-threonyl-[protein] + CMP + H(+). Its pathway is protein modification; protein glycosylation. It participates in glycolipid biosynthesis. Its function is as follows. Transfers the sialyl group (N-acetyl-alpha-neuraminyl or NeuAc) from CMP-NeuAc to the GalNAc residue on the NeuAc-alpha-2,3-Gal-beta-1,3-GalNAc sequence of glycoproteins and glycolipids forming an alpha-2,6-linkage. Produces branched type disialyl structures by transfer of a sialyl group onto a GalNAc residue inside the backbone core chains. Prefers O-glycans to glycoproteins or glycolipids. This Mus musculus (Mouse) protein is Alpha-N-acetyl-neuraminyl-2,3-beta-galactosyl-1,3-N-acetyl-galactosaminide alpha-2,6-sialyltransferase (St6galnac4).